A 422-amino-acid chain; its full sequence is CinA-like protein (422 aa).

The protein belongs to the CinA family.

The chain is CinA-like protein from Mycolicibacterium vanbaalenii (strain DSM 7251 / JCM 13017 / BCRC 16820 / KCTC 9966 / NRRL B-24157 / PYR-1) (Mycobacterium vanbaalenii).